Here is a 265-residue protein sequence, read N- to C-terminus: Indole-3-glycerol phosphate synthase (265 aa).

This sequence belongs to the TrpC family.

The enzyme catalyses 1-(2-carboxyphenylamino)-1-deoxy-D-ribulose 5-phosphate + H(+) = (1S,2R)-1-C-(indol-3-yl)glycerol 3-phosphate + CO2 + H2O. Its pathway is amino-acid biosynthesis; L-tryptophan biosynthesis; L-tryptophan from chorismate: step 4/5. This is Indole-3-glycerol phosphate synthase from Syntrophobacter fumaroxidans (strain DSM 10017 / MPOB).